Here is a 250-residue protein sequence, read N- to C-terminus: Pimeloyl-[acyl-carrier protein] methyl ester esterase (250 aa).

Substrate-binding positions include Trp-12, 71-72 (SL), and 138-142 (FVALQ). The active-site Nucleophile is Ser-71. Active-site residues include Asp-202 and His-230. His-230 lines the substrate pocket.

Belongs to the AB hydrolase superfamily. Carboxylesterase BioH family. Monomer.

The protein resides in the cytoplasm. It catalyses the reaction 6-carboxyhexanoyl-[ACP] methyl ester + H2O = 6-carboxyhexanoyl-[ACP] + methanol + H(+). Its pathway is cofactor biosynthesis; biotin biosynthesis. Functionally, the physiological role of BioH is to remove the methyl group introduced by BioC when the pimeloyl moiety is complete. It allows to synthesize pimeloyl-ACP via the fatty acid synthetic pathway through the hydrolysis of the ester bonds of pimeloyl-ACP esters. The polypeptide is Pimeloyl-[acyl-carrier protein] methyl ester esterase (Aromatoleum aromaticum (strain DSM 19018 / LMG 30748 / EbN1) (Azoarcus sp. (strain EbN1))).